The sequence spans 142 residues: MKYLGLALISAVFLIGACQAETPSQKCEEKYKGNTDKISCLHHCKYQYYGFIDVNYNIAQSEIRKFSNVLMDYGVVDKSKKRELKKVMHECAKQVKKEARKDSHWLNCRTSINYYRCVLTSKLIGPQRFDKAIQDYDKTISV.

Residues 1 to 20 (MKYLGLALISAVFLIGACQA) form the signal peptide. Disulfide bonds link Cys-27–Cys-44, Cys-40–Cys-108, and Cys-91–Cys-117.

The protein belongs to the PBP/GOBP family. In terms of tissue distribution, female salivary gland (at protein level).

Its subcellular location is the secreted. Functionally, inhibits contact coagulation pathway activation in the host by sequestering anionic polymers, such as polyphosphate and dextran sulfate, and thus blocking interaction of protein components of the pathway with negatively charged surfaces. Inhibits dextran sulfate-mediated autoactivation of host coagulation factor XII (F12). Inhibits dextran sulfate-mediated autoactivation of host factor XI (F11). Inhibits polyphosphate-mediated activation of host F11 by thrombin (F2). May inhibit dextran sulfate-mediated bradykinin generation in host plasma. The sequence is that of Salivary protein 15a from Phlebotomus duboscqi (Sandfly).